The primary structure comprises 321 residues: MASSDETIFDLPPYIRVFKDGRVERLHSSPYVPPSLNDPETGVSWKDVPISSKVSARIYLPKISDQQENEEKLPIFVYFHGAGFCLESAFRSFFHTFIKHFVSEAKAIGVSVEYRLAPEHPLPAAYEDCWEALQWVASHVRLDNSSLKRSMDKDPWIINYGDFDRLYLGGDSPGGNIVHNVLLRAGKEKLNGGVKILGAIQYYPYFLIRTSSKQSDYMENDYRCYWKLAYPNAPGGTDNPMINPTVENAPDLAGYGCSRLLISMVADETRDITLLFIEALKKSGWKGQLDVADFEAEFFDLFQTQTEVGKNMIRRLTSFIK.

Positions 80–82 match the Involved in the stabilization of the negatively charged intermediate by the formation of the oxyanion hole motif; the sequence is HGA. Active-site residues include Ser172 and Asp267.

The protein belongs to the 'GDXG' lipolytic enzyme family.

It catalyses the reaction dihydroprecondylocarpine acetate + NADPH = (+)-vincadifformine + acetate + NADP(+). It participates in alkaloid biosynthesis. Component of the seco-iridoid and derivatives monoterpenoid indole alkaloids (MIAs, e.g. vincadifformine) biosynthesis pathway. Catalyzes the conversion of O-acetylstemmadenine (OAS) to vincadifformine. May also trigger the formation of additional unknown MIAs. The sequence is that of Hydrolase 3 from Catharanthus roseus (Madagascar periwinkle).